The primary structure comprises 110 residues: Large ribosomal subunit protein uL22 (110 aa).

The protein belongs to the universal ribosomal protein uL22 family. Part of the 50S ribosomal subunit.

Its function is as follows. This protein binds specifically to 23S rRNA; its binding is stimulated by other ribosomal proteins, e.g. L4, L17, and L20. It is important during the early stages of 50S assembly. It makes multiple contacts with different domains of the 23S rRNA in the assembled 50S subunit and ribosome. In terms of biological role, the globular domain of the protein is located near the polypeptide exit tunnel on the outside of the subunit, while an extended beta-hairpin is found that lines the wall of the exit tunnel in the center of the 70S ribosome. The sequence is that of Large ribosomal subunit protein uL22 from Marinobacter nauticus (strain ATCC 700491 / DSM 11845 / VT8) (Marinobacter aquaeolei).